The chain runs to 224 residues: LexA repressor (224 aa).

The segment at residues Ile38–Arg58 is a DNA-binding region (H-T-H motif). A compositionally biased stretch (basic and acidic residues) spans Asn71–Asp82. Positions Asn71–Ser96 are disordered. Active-site for autocatalytic cleavage activity residues include Ser148 and Lys185.

Belongs to the peptidase S24 family. Homodimer.

It catalyses the reaction Hydrolysis of Ala-|-Gly bond in repressor LexA.. Its function is as follows. Represses a number of genes involved in the response to DNA damage (SOS response), including recA and lexA. In the presence of single-stranded DNA, RecA interacts with LexA causing an autocatalytic cleavage which disrupts the DNA-binding part of LexA, leading to derepression of the SOS regulon and eventually DNA repair. This Mycobacteroides abscessus (strain ATCC 19977 / DSM 44196 / CCUG 20993 / CIP 104536 / JCM 13569 / NCTC 13031 / TMC 1543 / L948) (Mycobacterium abscessus) protein is LexA repressor.